The sequence spans 131 residues: UPF0102 protein YraN (131 aa).

A compositionally biased stretch (polar residues) spans Met-1–Thr-19. The tract at residues Met-1 to Gly-20 is disordered.

The protein belongs to the UPF0102 family.

The polypeptide is UPF0102 protein YraN (Escherichia coli (strain 55989 / EAEC)).